The following is a 700-amino-acid chain: MRRFLLLYATQRGQAKAIAEEISEQALSHGFSADLHCVSESEKYDLKTETGPLVMVVSTTGTGDPPDTARKFVKEIHNKTLPTDFFAHLWYGLLGLGDSEYTYFCNGGKVIDKRLQELGAQHFYDTGHADDCVGLELVVEPWIDGLWPALTKHFKSLGGQEDMSDSDTLAQASDAPLSMAMKPELLHIQSQVELLSLEDVGKRDSELQEQNETNKNQPSRIEDFDSSLVNSVPPLSQSSLSIPAVSPEYLEVYLQESLGQDENQASVPPSVDPIFQVPISKAVELTTNDAIKTTLLLELDISKVEFSHQPGDSFNVICPNSGSEVEDLLQRLQLADKQAHRVILKIKMDTKKKGASLPQHVPEGSSLQFIFTWCLEIRAVPKKAFLRALSDYTSDATEKRRLQELCSKQGAADYNRFIRDASVCLLDLLLTFPSCQPPLNLLLEHLPKLQPRPYSCASSSLLHPDKLHFVFNIVELPSNTTAASLRKGVCTGWLATLVAPFLQPNTEVLTADHSDALAPEILISPRATNSFHLPDDLSAPIIMVGPGTGVAPFVGFLQHREKLQEQHPDGNFGAMWLFFGCRHKDRDYLFREELRHFLKTGVLTHLKVSFSRDAAPEEEEEAPAKYVQDNLQHHSQQVARTLLQENGYIYVCGDAKNMAKDVHDALVEIISKEAGVDKLEAMKTLATLKQEKRYLQDIWS.

One can recognise a Flavodoxin-like domain in the interval 4–147 (FLLLYATQRG…VVEPWIDGLW (144 aa)). FMN contacts are provided by residues 10–14 (TQRGQ) and 93–124 (LLGL…QHFY). Residues 168 to 247 (TLAQASDAPL…SSLSIPAVSP (80 aa)) are hinge. Phosphoserine occurs at positions 173 and 190. The region spanning 272 to 534 (DPIFQVPISK…PRATNSFHLP (263 aa)) is the FAD-binding FR-type domain. Lysine 292 lines the NADP(+) pocket. FAD is bound by residues 452-455 (RPYS) and 488-491 (GVCT). Residues 611 to 612 (SR), 626 to 628 (YVQ), and aspartate 661 each bind NADP(+). Tryptophan 699 is a binding site for FAD.

Forms a multiprotein complex with MMACHC, MMADHC and MTR. FAD serves as cofactor. The cofactor is FMN.

It is found in the cytoplasm. It carries out the reaction 2 methylcob(III)alamin-[methionine synthase] + 2 S-adenosyl-L-homocysteine + NADP(+) + H(+) = 2 cob(II)alamin-[methionine synthase] + 2 S-adenosyl-L-methionine + NADPH. It catalyses the reaction 2 cob(II)alamin + A + 2 H2O + 2 H(+) = 2 aquacob(III)alamin + AH2. Functionally, key enzyme in methionine and folate homeostasis responsible for the reactivation of methionine synthase (MTR/MS) activity by catalyzing the reductive methylation of MTR-bound cob(II)alamin. Cobalamin (vitamin B12) forms a complex with MTR to serve as an intermediary in methyl transfer reactions that cycles between MTR-bound methylcob(III)alamin and MTR bound-cob(I)alamin forms, and occasional oxidative escape of the cob(I)alamin intermediate during the catalytic cycle leads to the inactive cob(II)alamin species. The processing of cobalamin in the cytosol occurs in a multiprotein complex composed of at least MMACHC, MMADHC, MTRR and MTR which may contribute to shuttle safely and efficiently cobalamin towards MTR in order to produce methionine. Also necessary for the utilization of methyl groups from the folate cycle, thereby affecting transgenerational epigenetic inheritance. Also acts as a molecular chaperone for methionine synthase by stabilizing apoMTR and incorporating methylcob(III)alamin into apoMTR to form the holoenzyme. Also serves as an aquacob(III)alamin reductase by reducing aquacob(III)alamin to cob(II)alamin; this reduction leads to stimulation of the conversion of apoMTR and aquacob(III)alamin to MTR holoenzyme. The protein is Methionine synthase reductase (Mtrr) of Rattus norvegicus (Rat).